The chain runs to 173 residues: Crossover junction endodeoxyribonuclease RuvC (173 aa).

Residues Asp8, Glu67, and Asp139 contribute to the active site. The Mg(2+) site is built by Asp8, Glu67, and Asp139.

The protein belongs to the RuvC family. In terms of assembly, homodimer which binds Holliday junction (HJ) DNA. The HJ becomes 2-fold symmetrical on binding to RuvC with unstacked arms; it has a different conformation from HJ DNA in complex with RuvA. In the full resolvosome a probable DNA-RuvA(4)-RuvB(12)-RuvC(2) complex forms which resolves the HJ. The cofactor is Mg(2+).

The protein localises to the cytoplasm. It carries out the reaction Endonucleolytic cleavage at a junction such as a reciprocal single-stranded crossover between two homologous DNA duplexes (Holliday junction).. Its function is as follows. The RuvA-RuvB-RuvC complex processes Holliday junction (HJ) DNA during genetic recombination and DNA repair. Endonuclease that resolves HJ intermediates. Cleaves cruciform DNA by making single-stranded nicks across the HJ at symmetrical positions within the homologous arms, yielding a 5'-phosphate and a 3'-hydroxyl group; requires a central core of homology in the junction. The consensus cleavage sequence is 5'-(A/T)TT(C/G)-3'. Cleavage occurs on the 3'-side of the TT dinucleotide at the point of strand exchange. HJ branch migration catalyzed by RuvA-RuvB allows RuvC to scan DNA until it finds its consensus sequence, where it cleaves and resolves the cruciform DNA. The polypeptide is Crossover junction endodeoxyribonuclease RuvC (Vibrio cholerae serotype O1 (strain ATCC 39541 / Classical Ogawa 395 / O395)).